The following is a 487-amino-acid chain: Protein NEN2 (487 aa).

The Exonuclease domain maps to 18–179 (FFDVETTIPF…LDDVRMNFEV (162 aa)). Positions 20 and 22 each coordinate Mg(2+). The active-site Proton donor/acceptor is the histidine 167. Aspartate 172 is a Mg(2+) binding site. Disordered stretches follow at residues 200 to 233 (NSVT…TGEN) and 269 to 291 (SDVP…GTGD). A compositionally biased stretch (polar residues) spans 221-233 (PLQSPTDQQTGEN).

The cofactor is Mg(2+). As to expression, expressed in the sieve elements and phloem pole pericycle cells.

It localises to the cytoplasm. The protein resides in the nucleus. Functionally, probable exonuclease involved in enuclation of sieve elements. The polypeptide is Protein NEN2 (Arabidopsis thaliana (Mouse-ear cress)).